A 1760-amino-acid chain; its full sequence is Chitin synthase A (1760 aa).

N-linked (GlcNAc...) asparagine glycosylation occurs at Asn-157. Transmembrane regions (helical) follow at residues 729-749 (IWTGFVWALTFWIPSFVLRFV) and 765-785 (LVLVFLILLFNAIVCFYIIAF). N-linked (GlcNAc...) asparagine glycosylation is found at Asn-876 and Asn-996. The helical transmembrane segment at 1027 to 1047 (ILLAFTCLICAVILVKFLAAL) threads the bilayer. Asn-1392 carries an N-linked (GlcNAc...) asparagine glycan. 3 consecutive transmembrane segments (helical) span residues 1417 to 1437 (FVVLVDLLGTIILPATCVYLG), 1449 to 1469 (IPIISIAILAGVYGLQAIIFI), and 1477 to 1497 (IGWMIIYICAYPIYSFVLPMY). 3 N-linked (GlcNAc...) asparagine glycosylation sites follow: Asn-1557, Asn-1645, and Asn-1650. The segment at 1670–1691 (DNLLGVPRPNSRSPVGGYTSRP) is disordered. One can recognise a DEK-C domain in the interval 1702 to 1758 (GPDEMAITDAIRSCLAEVDLDTVTKKQVRALVEQRLQATLTGDKRAFLDRQIDQELA).

It belongs to the chitin synthase family. Class V subfamily.

Its subcellular location is the cell membrane. The enzyme catalyses [(1-&gt;4)-N-acetyl-beta-D-glucosaminyl](n) + UDP-N-acetyl-alpha-D-glucosamine = [(1-&gt;4)-N-acetyl-beta-D-glucosaminyl](n+1) + UDP + H(+). In terms of biological role, polymerizes chitin, a structural polymer of the cell wall and septum, by transferring the sugar moiety of UDP-GlcNAc to the non-reducing end of the growing chitin polymer. Plays an important role in cell-wall formation during both hyphal growth and conidiation. In Aspergillus oryzae (strain ATCC 42149 / RIB 40) (Yellow koji mold), this protein is Chitin synthase A.